A 136-amino-acid chain; its full sequence is UPF0213 protein ASA_0550 (136 aa).

Positions 17 to 92 (GQWSIYLVRT…KQQSKAFKER (76 aa)) constitute a GIY-YIG domain.

The protein belongs to the UPF0213 family.

The chain is UPF0213 protein ASA_0550 from Aeromonas salmonicida (strain A449).